The chain runs to 144 residues: Maximins 1/H12 (144 aa).

Residues 1 to 18 (MNFKYIVAVSFLIASAYA) form the signal peptide. A propeptide spanning residues 19 to 43 (RSEENDEQSLSQRDVLEEESLREIR) is cleaved from the precursor. Asparagine amide is present on N70. Positions 74–123 (TAEEHEVMKRLEVVMRDLDSLDYPEEASERETRDFNQEEIANLYTKKEKR) are excised as a propeptide. I143 is subject to Isoleucine amide.

The protein belongs to the bombinin family. As to expression, expressed by the skin glands.

It is found in the secreted. Functionally, maximin-1 shows antibacterial activity against both Gram-positive and Gram-negative bacteria. It also shows antimicrobial activity against the fungus C.albicans, but not against A.flavus nor P.uticale. It has little hemolytic activity. It possess a significant cytotoxicity against tumor cell lines. It does not possess a significant anti-HIV activity. It shows high spermicidal activity. In terms of biological role, maximin-H12 shows antimicrobial activity against bacteria and against the fungus C.albicans. Shows strong hemolytic activity. The polypeptide is Maximins 1/H12 (Bombina maxima (Giant fire-bellied toad)).